A 305-amino-acid chain; its full sequence is GMP synthase [glutamine-hydrolyzing] subunit B (305 aa).

The 184-residue stretch at 2 to 185 (VDVDSFVEDA…LGLEEIISER (184 aa)) folds into the GMPS ATP-PPase domain. Residue 29 to 35 (SGGVDSS) participates in ATP binding.

As to quaternary structure, heterodimer composed of a glutamine amidotransferase subunit (A) and a GMP-binding subunit (B).

The catalysed reaction is XMP + L-glutamine + ATP + H2O = GMP + L-glutamate + AMP + diphosphate + 2 H(+). It functions in the pathway purine metabolism; GMP biosynthesis; GMP from XMP (L-Gln route): step 1/1. Catalyzes the synthesis of GMP from XMP. The protein is GMP synthase [glutamine-hydrolyzing] subunit B of Halobacterium salinarum (strain ATCC 29341 / DSM 671 / R1).